The primary structure comprises 776 residues: DNA ligase (776 aa).

NAD(+) is bound by residues 31–35, 80–81, and glutamate 112; these read DAEYD and SL. Lysine 114 acts as the N6-AMP-lysine intermediate in catalysis. The NAD(+) site is built by arginine 135, glutamate 172, lysine 288, and lysine 312. Zn(2+) is bound by residues cysteine 406, cysteine 409, cysteine 436, and cysteine 442. Residues 693–776 form the BRCT domain; the sequence is AEGLPLAGQT…VFLDEQGIAI (84 aa).

The protein belongs to the NAD-dependent DNA ligase family. LigA subfamily. Mg(2+) serves as cofactor. It depends on Mn(2+) as a cofactor.

It carries out the reaction NAD(+) + (deoxyribonucleotide)n-3'-hydroxyl + 5'-phospho-(deoxyribonucleotide)m = (deoxyribonucleotide)n+m + AMP + beta-nicotinamide D-nucleotide.. In terms of biological role, DNA ligase that catalyzes the formation of phosphodiester linkages between 5'-phosphoryl and 3'-hydroxyl groups in double-stranded DNA using NAD as a coenzyme and as the energy source for the reaction. It is essential for DNA replication and repair of damaged DNA. In Pseudomonas putida (strain W619), this protein is DNA ligase.